Here is a 170-residue protein sequence, read N- to C-terminus: MRHSNSGRKFSRTPAHRKAMLHNLAKALLIHGKIRTTEIKAKELRRVVEPLITLAKRNDLHARRQAYRVLNDHALVKRLFDEIGPVFAGVPGGYTRILKMAMPRKGDNAPMAIIELSRSSETAAAEAPKAAKAAPVKEAKPAAEEAPAKPKRTRKPKADEADAEAAKEEN.

The segment covering 124 to 134 (AAEAPKAAKAA) has biased composition (low complexity). Residues 124–170 (AAEAPKAAKAAPVKEAKPAAEEAPAKPKRTRKPKADEADAEAAKEEN) form a disordered region. Composition is skewed to basic and acidic residues over residues 135-148 (PVKEAKPAAEEAPA) and 156-170 (PKADEADAEAAKEEN).

It belongs to the bacterial ribosomal protein bL17 family. As to quaternary structure, part of the 50S ribosomal subunit. Contacts protein L32.

This Desulfovibrio desulfuricans (strain ATCC 27774 / DSM 6949 / MB) protein is Large ribosomal subunit protein bL17.